We begin with the raw amino-acid sequence, 215 residues long: Formate dehydrogenase subunit beta (215 aa).

Positions 3–32 constitute a 4Fe-4S ferredoxin-type 1 domain; it reads KGFFVDTTRCTACRGCQVACKQWHGNPATP. The [4Fe-4S] cluster site is built by Cys12, Cys15, Cys18, Cys22, Cys73, Cys76, Cys81, Cys121, Cys138, Cys141, Cys153, and Cys157. A 4Fe-4S ferredoxin-type 2 domain is found at 129 to 168; the sequence is VAESNQMAKCDMCIDRITNGLRPACVTSCPTGAMNFGDLS.

In terms of assembly, heterodimer of alpha (FdhA) and beta (FdhB) subunits. [4Fe-4S] cluster serves as cofactor.

It is found in the periplasm. Its function is as follows. Beta chain of the formate dehydrogenase (FDH) catalyzes the reversible two-electron oxidation of formate to carbon dioxide. FDH loses activity in the presence of air, but this activity can be restored. This chain is an electron transfer unit. In Megalodesulfovibrio gigas (strain ATCC 19364 / DSM 1382 / NCIMB 9332 / VKM B-1759) (Desulfovibrio gigas), this protein is Formate dehydrogenase subunit beta.